We begin with the raw amino-acid sequence, 260 residues long: Small ribosomal subunit protein uS3 (260 aa).

The region spanning 39–114 is the KH type-2 domain; it reads LRQYIEQKLG…QIRINVVEVQ (76 aa). Residues 218 to 260 form a disordered region; that stretch reads QEVATPPPSPRDRDRDRGDRDREPRRRQQQRRRQQFEDRSNEG. Basic and acidic residues-rich tracts occupy residues 227-243 and 251-260; these read PRDR…EPRR and QQFEDRSNEG.

Belongs to the universal ribosomal protein uS3 family. In terms of assembly, part of the 30S ribosomal subunit. Forms a tight complex with proteins S10 and S14.

In terms of biological role, binds the lower part of the 30S subunit head. Binds mRNA in the 70S ribosome, positioning it for translation. This Nostoc sp. (strain PCC 7120 / SAG 25.82 / UTEX 2576) protein is Small ribosomal subunit protein uS3.